We begin with the raw amino-acid sequence, 293 residues long: Elongation factor Ts (293 aa).

Residues 80 to 83 (TDFV) form an involved in Mg(2+) ion dislocation from EF-Tu region.

Belongs to the EF-Ts family.

The protein localises to the cytoplasm. Its function is as follows. Associates with the EF-Tu.GDP complex and induces the exchange of GDP to GTP. It remains bound to the aminoacyl-tRNA.EF-Tu.GTP complex up to the GTP hydrolysis stage on the ribosome. The protein is Elongation factor Ts of Burkholderia multivorans (strain ATCC 17616 / 249).